Consider the following 160-residue polypeptide: MVSFKAILTLSLIGAAFATPIEQRAAEPVEDSGAVANSPEGSGMDLGGTDPTADAIEERGLLVRNILRQLLNNKQSGLTIISSTSNAITWLSRPPRRGRSLREYPVFQQHHKVYNYNSRPKENPGPFRLIATKDSRHFCGIISHDGIGHNPNAGLFHLCK.

The first 18 residues, 1-18, serve as a signal peptide directing secretion; that stretch reads MVSFKAILTLSLIGAAFA. The disordered stretch occupies residues 26-51; sequence AEPVEDSGAVANSPEGSGMDLGGTDP. Residue Glu-103 is the Proton acceptor of the active site. The active-site Proton donor is the His-144.

Belongs to the ribonuclease U2 family.

Its subcellular location is the secreted. This purine-specific ribonuclease cleaves 28S RNA in eukaryotic ribosomes, inhibits protein synthesis, and shows antitumor activity. This Arthroderma benhamiae (strain ATCC MYA-4681 / CBS 112371) (Trichophyton mentagrophytes) protein is Ribonuclease ARB_07070.